The primary structure comprises 353 residues: Peroxisome assembly protein 12-A (353 aa).

Over 1 to 19 (MAERGAHITTTSASDDRPS) the chain is Peroxisomal matrix. The chain crosses the membrane as a helical span at residues 20 to 47 (IFEVVAQESLMAAARPALHHIVKVLAES). Residues 48 to 51 (NPSR) lie on the Cytoplasmic side of the membrane. A helical transmembrane segment spans residues 52–76 (YGTLWRWFDELYTLLDWLLQQHYLS). At 77–104 (WASASFSENFYGLKRITLGKEVGQRNLP) the chain is on the peroxisomal matrix side. A helical membrane pass occupies residues 105-134 (RKEYWKSLLLLVLIPYLRVKLEKIVNRLRE). Residues 135–139 (EQDYS) lie on the Cytoplasmic side of the membrane. A helical membrane pass occupies residues 140 to 178 (IQNPTSFHKRCYKAILASYPFVKLGWEAWFLFYQLRYIL). At 179–243 (WNGKNHSPLL…LGAVALSVSS (65 aa)) the chain is on the peroxisomal matrix side. A helical membrane pass occupies residues 244 to 271 (SLSLGVFFLQFLDWWYSAENQETLKSLN). At 272–353 (NLPVPPPPIH…HLIKLYTPDG (82 aa)) the chain is on the cytoplasmic side. Cys298, Cys301, Cys319, and Cys322 together coordinate Zn(2+). The RING-type; degenerate zinc-finger motif lies at 298–337 (CPLCRKVRVNDTALGTSGYVFCYRCAYYYVKTHQRCPVSG).

It belongs to the pex2/pex10/pex12 family. As to quaternary structure, component of the PEX2-PEX10-PEX12 retrotranslocation channel.

It is found in the peroxisome membrane. It participates in protein modification; protein ubiquitination. Its function is as follows. Component of a retrotranslocation channel required for peroxisome organization by mediating export of the PEX5 receptor from peroxisomes to the cytosol, thereby promoting PEX5 recycling. The retrotranslocation channel is composed of PEX2, PEX10 and PEX12; each subunit contributing transmembrane segments that coassemble into an open channel that specifically allows the passage of PEX5 through the peroxisomal membrane. PEX12 also regulates PEX5 recycling by activating the E3 ubiquitin-protein ligase activity of PEX10. When PEX5 recycling is compromised, PEX12 stimulates PEX10-mediated polyubiquitination of PEX5, leading to its subsequent degradation. The protein is Peroxisome assembly protein 12-A of Xenopus laevis (African clawed frog).